Here is a 117-residue protein sequence, read N- to C-terminus: Hydrogenase maturation factor HypA (117 aa).

His-2 lines the Ni(2+) pocket. 4 residues coordinate Zn(2+): Cys-73, Cys-76, Cys-92, and Cys-95.

This sequence belongs to the HypA/HybF family.

Involved in the maturation of [NiFe] hydrogenases. Required for nickel insertion into the metal center of the hydrogenase. In Solidesulfovibrio magneticus (strain ATCC 700980 / DSM 13731 / RS-1) (Desulfovibrio magneticus), this protein is Hydrogenase maturation factor HypA.